We begin with the raw amino-acid sequence, 558 residues long: Chaperonin GroEL 1 (558 aa).

ATP is bound by residues 29–32, 86–90, G413, and D494; these read TLGP and DGTTT.

It belongs to the chaperonin (HSP60) family. In terms of assembly, forms a cylinder of 14 subunits composed of two heptameric rings stacked back-to-back. Interacts with the co-chaperonin GroES.

It is found in the cytoplasm. It catalyses the reaction ATP + H2O + a folded polypeptide = ADP + phosphate + an unfolded polypeptide.. In terms of biological role, together with its co-chaperonin GroES, plays an essential role in assisting protein folding. The GroEL-GroES system forms a nano-cage that allows encapsulation of the non-native substrate proteins and provides a physical environment optimized to promote and accelerate protein folding. The polypeptide is Chaperonin GroEL 1 (Acaryochloris marina (strain MBIC 11017)).